The following is a 403-amino-acid chain: Casein kinase I isoform delta-A (403 aa).

A Protein kinase domain is found at Tyr9–Phe277. ATP is bound by residues Ile15–Ile23 and Lys38. Asp128 functions as the Proton acceptor in the catalytic mechanism. The interval Gln315–Pro340 is autoinhibitory. The tract at residues Arg322–Arg403 is disordered.

The protein belongs to the protein kinase superfamily. In terms of assembly, monomer. Interacts with per1 and per2. Component of the circadian core oscillator. In terms of processing, autophosphorylated on serine and threonine residues.

It is found in the cytoplasm. It localises to the nucleus. It carries out the reaction L-seryl-[protein] + ATP = O-phospho-L-seryl-[protein] + ADP + H(+). The enzyme catalyses L-threonyl-[protein] + ATP = O-phospho-L-threonyl-[protein] + ADP + H(+). With respect to regulation, exhibits substrate-dependent heparin activation. In terms of biological role, casein kinases are operationally defined by their preferential utilization of acidic proteins such as caseins as substrates. Central component of the circadian clock. May act as a negative regulator of circadian rhythmicity by phosphorylating per1 and per2, which may lead to their degradation. Participates in wnt signaling. This chain is Casein kinase I isoform delta-A (csnk1da), found in Danio rerio (Zebrafish).